Consider the following 306-residue polypeptide: F-box/LRR-repeat protein At3g26922 (306 aa).

Residues 13 to 73 form the F-box domain; it reads EDRISDLPEA…QSEDETYSEI (61 aa). LRR repeat units follow at residues 67–93, 98–122, 138–170, 171–196, 215–243, and 263–288; these read DETY…HLGF, CRSV…VLHV, CETL…RLEN, VDYK…VVYR, LTIY…KIDG, and IMNV…SLAL.

The chain is F-box/LRR-repeat protein At3g26922 from Arabidopsis thaliana (Mouse-ear cress).